The primary structure comprises 285 residues: Protein phosphatase 1 regulatory subunit 3B (285 aa).

Residues 62–65 carry the PP1-binding motif motif; it reads RVSF. The region spanning 125-233 is the CBM21 domain; sequence RNRLQADHVC…SNRGKNYRII (109 aa). S261 carries the post-translational modification Phosphoserine.

Interacts with glycogen, PPP1CC catalytic subunit of PP1 and PYGL. Associates with glycogen particles. Forms complexes with debranching enzyme, glycogen phosphorylase, glycogen synthase and phosphorylase kinase which is necessary for its regulation of PP1 activity. Highly expressed in the liver and, at lower levels, in skeletal muscle, including in vastus lateralis, gastrocnemius and soleus (at protein level). Highest mRNA levels are observed in skeletal muscle, and only moderate levels in liver and heart. Weak expression in placenta and lung.

Acts as a glycogen-targeting subunit for phosphatase PP1. Facilitates interaction of the PP1 with enzymes of the glycogen metabolism and regulates its activity. Suppresses the rate at which PP1 dephosphorylates (inactivates) glycogen phosphorylase and enhances the rate at which it activates glycogen synthase and therefore limits glycogen breakdown. Its activity is inhibited by PYGL, resulting in inhibition of the glycogen synthase and glycogen phosphorylase phosphatase activities of PP1. Dramatically increases basal and insulin-stimulated glycogen synthesis upon overexpression in hepatocytes. The sequence is that of Protein phosphatase 1 regulatory subunit 3B (PPP1R3B) from Homo sapiens (Human).